We begin with the raw amino-acid sequence, 296 residues long: Fructose-bisphosphate aldolase class 1 (296 aa).

Catalysis depends on E175, which acts as the Proton acceptor. The active-site Schiff-base intermediate with dihydroxyacetone-P is K212.

This sequence belongs to the class I fructose-bisphosphate aldolase family.

It catalyses the reaction beta-D-fructose 1,6-bisphosphate = D-glyceraldehyde 3-phosphate + dihydroxyacetone phosphate. The protein operates within carbohydrate degradation; glycolysis; D-glyceraldehyde 3-phosphate and glycerone phosphate from D-glucose: step 4/4. This chain is Fructose-bisphosphate aldolase class 1, found in Staphylococcus aureus (strain MRSA252).